The following is a 194-amino-acid chain: Large ribosomal subunit protein eL15 (194 aa).

The disordered stretch occupies residues 160–194; that stretch reads RGLTSAGKKGRGLMYKGKGTEKVRPSVRANSKKAK.

This sequence belongs to the eukaryotic ribosomal protein eL15 family.

This chain is Large ribosomal subunit protein eL15, found in Methanococcus maripaludis (strain C7 / ATCC BAA-1331).